The sequence spans 133 residues: MATENNKNPAIRFLLSVVGSGNSLSILNGLFLSFKTILASSSATLLLNLALVENECSKEPRTSTALAAEGVTFGNPLVTSLNIMYSLFYLLLLCRGLVRRERSNCFKTGIKMTRRRFLSLHNDQNKNKQNAKR.

2 helical membrane-spanning segments follow: residues 13–33 (FLLS…LFLS) and 73–93 (FGNP…LLLL).

The protein resides in the membrane. This is an uncharacterized protein from Saccharomyces cerevisiae (strain ATCC 204508 / S288c) (Baker's yeast).